Here is a 376-residue protein sequence, read N- to C-terminus: Chanoclavine-I aldehyde reductase easA (376 aa).

FMN is bound by residues 29–31 (PTT), Ala64, Gln106, and His173. The substrate site is built by His173 and Asn176. Tyr178 acts as the Proton donor in catalysis. Residues Lys225, Gly297, 323–324 (GR), and Arg324 each bind FMN. Tyr351 serves as a coordination point for substrate.

It belongs to the NADH:flavin oxidoreductase/NADH oxidase family. The cofactor is FMN.

It catalyses the reaction dihydrochanoclavine-I aldehyde + NADP(+) = chanoclavine-I aldehyde + NADPH + H(+). The protein operates within alkaloid biosynthesis; ergot alkaloid biosynthesis. Aldehyde reductase; part of the gene cluster that mediates the biosynthesis of fumiclavanine C, a fungal ergot alkaloid. DmaW catalyzes the first step of ergot alkaloid biosynthesis by condensing dimethylallyl diphosphate (DMAP) and tryptophan to form 4-dimethylallyl-L-tryptophan. The second step is catalyzed by the methyltransferase easF that methylates 4-dimethylallyl-L-tryptophan in the presence of S-adenosyl-L-methionine, resulting in the formation of 4-dimethylallyl-L-abrine. The catalase easC and the FAD-dependent oxidoreductase easE then transform 4-dimethylallyl-L-abrine to chanoclavine-I which is further oxidized by EasD in the presence of NAD(+), resulting in the formation of chanoclavine-I aldehyde. EasA reduces chanoclavine-I aldehyde to dihydrochanoclavine-I aldehyde that spontaneously dehydrates to form 6,8-dimethyl-6,7-didehydroergoline. EasG then catalyzes the reduction of 6,8-dimethyl-6,7-didehydroergoline to form festuclavine. Hydrolysis of festuclavine by easM then leads to the formation of fumigaclavine B which is in turn acetylated by easN to fumigaclavine A. Finally, easL catalyzes the conversion of fumigaclavine A into fumigaclavine C by attaching a dimethylallyl moiety to C-2 of the indole nucleus. The sequence is that of Chanoclavine-I aldehyde reductase easA from Aspergillus fumigatus (strain ATCC MYA-4609 / CBS 101355 / FGSC A1100 / Af293) (Neosartorya fumigata).